The chain runs to 735 residues: Protein argonaute (735 aa).

The segment at 1–94 (MDLLSNLRRS…LVQMGTKQLD (94 aa)) is N-terminal domain. A linker L1 region spans residues 95–180 (CRNDAHRCAL…IDIHHRFYTP (86 aa)). The interval 181-284 (WTVHQWLEQY…SPSLTMEMLA (104 aa)) is PAZ domain. The interval 285-369 (KVAEDSTVCD…SKTADIRNKG (85 aa)) is linker L2. A mid domain region spans residues 370-498 (CAKIGETSFG…LLCKAGWQPI (129 aa)). A PIWI domain region spans residues 499-735 (QLESVDHPEV…NISRDKLIAV (237 aa)). Active-site residues include D516, E550, D584, and D709. D516 lines the Mn(2+) pocket. The Mn(2+) site is built by D584, D709, and V735.

The protein belongs to the argonaute family. Long pAgo subfamily. In terms of assembly, copurifies with SSB proteins Synpcc7942_0079 and Synpcc7942_0301 as well as other proteins. Requires Mn(2+) as cofactor.

Its function is as follows. A DNA-guided ssDNA endonuclease that might play a role in defense against invading mobile genetic elements. Uses short ssDNA sequences as guides (gDNA) to bind complementary target strands, resulting in cleavage of the target DNA (tDNA). The cleavage site is 10 nucleotides (nt) downstream of the target residue base-paired with the 5'-end of the gDNA. Both 5'-P and 5'-OH gDNAs confer activity; a 5'-OH guide cleaves between nt 10-11 and nt 11-12. Guide DNA mismatches in the seed (nt 2-9) can enhance activity, mismatches 1-5 nt after the cleavage site block activity. Has no appreciable activity with guide RNA or on target RNA. In situ binds to 5'-phosphorylated DNA 14-20 nt in length; small DNA maps over the chromosome and plasmid with some preference for the replication origin and the probable termination site. Also has weak guide-independent nuclease activity on DNA called 'chopping'. Overexpression of wild-type or catalytically inactive mutant has no visible effect during growth under continuous high light for up to a month. The polypeptide is Protein argonaute (Synechococcus elongatus (strain ATCC 33912 / PCC 7942 / FACHB-805) (Anacystis nidulans R2)).